Consider the following 681-residue polypeptide: DNA ligase (681 aa).

Residues 32–36 (DIEYD), 81–82 (SL), and glutamate 113 each bind NAD(+). The active-site N6-AMP-lysine intermediate is the lysine 115. Arginine 136, glutamate 173, lysine 290, and lysine 314 together coordinate NAD(+). Zn(2+) contacts are provided by cysteine 408, cysteine 411, cysteine 426, and cysteine 432. The 86-residue stretch at 596–681 (EIDSPFAGKT…LNNHGDVSTL (86 aa)) folds into the BRCT domain.

Belongs to the NAD-dependent DNA ligase family. LigA subfamily. The cofactor is Mg(2+). Mn(2+) is required as a cofactor.

It carries out the reaction NAD(+) + (deoxyribonucleotide)n-3'-hydroxyl + 5'-phospho-(deoxyribonucleotide)m = (deoxyribonucleotide)n+m + AMP + beta-nicotinamide D-nucleotide.. Its function is as follows. DNA ligase that catalyzes the formation of phosphodiester linkages between 5'-phosphoryl and 3'-hydroxyl groups in double-stranded DNA using NAD as a coenzyme and as the energy source for the reaction. It is essential for DNA replication and repair of damaged DNA. This is DNA ligase from Pectobacterium atrosepticum (strain SCRI 1043 / ATCC BAA-672) (Erwinia carotovora subsp. atroseptica).